Consider the following 235-residue polypeptide: Orotidine 5'-phosphate decarboxylase (235 aa).

Substrate contacts are provided by residues Asp17, Lys39, 66-75 (DLKLHDIGNT), Thr121, Arg182, Gln191, Gly211, and Arg212. Lys68 serves as the catalytic Proton donor.

Belongs to the OMP decarboxylase family. Type 1 subfamily. As to quaternary structure, homodimer.

The enzyme catalyses orotidine 5'-phosphate + H(+) = UMP + CO2. It functions in the pathway pyrimidine metabolism; UMP biosynthesis via de novo pathway; UMP from orotate: step 2/2. Functionally, catalyzes the decarboxylation of orotidine 5'-monophosphate (OMP) to uridine 5'-monophosphate (UMP). This Afipia carboxidovorans (strain ATCC 49405 / DSM 1227 / KCTC 32145 / OM5) (Oligotropha carboxidovorans) protein is Orotidine 5'-phosphate decarboxylase.